Reading from the N-terminus, the 331-residue chain is UDP-GalNAc:beta-1,3-N-acetylgalactosaminyltransferase 1 (331 aa).

Residues M1–W20 are Cytoplasmic-facing. Residues S21–V43 traverse the membrane as a helical; Signal-anchor for type II membrane protein segment. Topologically, residues I44–Y331 are lumenal. N-linked (GlcNAc...) asparagine glycosylation is found at N72, N154, N198, N212, and N326.

This sequence belongs to the glycosyltransferase 31 family. Mg(2+) serves as cofactor. Detected in brain, ovary, kidney, uterus and stomach. In ovary, specifically expressed in follicular granulosa cells and shows particularly strong expression at later stages of follicle development.

It localises to the golgi apparatus membrane. It catalyses the reaction a globoside Gb3Cer (d18:1(4E)) + UDP-N-acetyl-alpha-D-galactosamine = a globoside Gb4Cer (d18:1(4E)) + UDP + H(+). It functions in the pathway protein modification; protein glycosylation. Its function is as follows. Transfers N-acetylgalactosamine onto globotriaosylceramide. Plays a critical role in preimplantation stage embryonic development. The protein is UDP-GalNAc:beta-1,3-N-acetylgalactosaminyltransferase 1 of Mus musculus (Mouse).